Reading from the N-terminus, the 400-residue chain is Calsequestrin-2 (400 aa).

The N-terminal stretch at 1–19 (MKRTHLFIVGVYVLSSCRA) is a signal peptide. Tyr282 bears the Phosphotyrosine mark. An N-linked (GlcNAc...) asparagine glycan is attached at Asn335. Positions 365 to 400 (VLSGKINTEDDDDEDDDDDNSDEEDNDDSDDDDDDE) are disordered. Residues 373 to 400 (EDDDDEDDDDDNSDEEDNDDSDDDDDDE) are compositionally biased toward acidic residues.

The protein belongs to the calsequestrin family. In terms of assembly, monomer, homodimer and homooligomer. Mostly monomeric in the absence of calcium. Forms higher oligomers in a calcium-dependent manner. Dimers associate to form tetramers, that then form linear homomer chains. Interacts with ASPH and TRDN. Phosphorylation in the C-terminus, probably by CK2, moderately increases calcium buffering capacity. Post-translationally, N-glycosylated.

The protein localises to the sarcoplasmic reticulum lumen. Functionally, calsequestrin is a high-capacity, moderate affinity, calcium-binding protein and thus acts as an internal calcium store in muscle. Calcium ions are bound by clusters of acidic residues at the protein surface, especially at the interface between subunits. Can bind around 60 Ca(2+) ions. Regulates the release of lumenal Ca(2+) via the calcium release channel RYR2; this plays an important role in triggering muscle contraction. Plays a role in excitation-contraction coupling in the heart and in regulating the rate of heart beats. The sequence is that of Calsequestrin-2 (CASQ2) from Pongo abelii (Sumatran orangutan).